Consider the following 189-residue polypeptide: Accessory gene regulator protein B (189 aa).

A run of 5 helical transmembrane segments spans residues 49 to 69, 81 to 100, 110 to 130, 143 to 163, and 164 to 184; these read IAYI…FYLI, SFWC…LVIV, IILT…ATKK, YYAI…KEPF, and AQFI…IFFI.

It belongs to the AgrB family.

Its subcellular location is the cell membrane. Functionally, essential for the production of a quorum sensing system signal molecule, the autoinducing peptide (AIP). This quorum sensing system is responsible for the regulation of the expression of virulence factor genes. Involved in the proteolytic processing of AgrD, the precursor of AIP. This is Accessory gene regulator protein B from Staphylococcus aureus (strain COL).